Consider the following 209-residue polypeptide: Probable GTP-binding protein EngB (209 aa).

Positions 22–198 (TPLEIAFVGR…NRTVGSWFDA (177 aa)) constitute an EngB-type G domain. 2 residues coordinate Mg(2+): Ser-37 and Thr-59.

This sequence belongs to the TRAFAC class TrmE-Era-EngA-EngB-Septin-like GTPase superfamily. EngB GTPase family. Mg(2+) is required as a cofactor.

In terms of biological role, necessary for normal cell division and for the maintenance of normal septation. The polypeptide is Probable GTP-binding protein EngB (Neisseria gonorrhoeae (strain ATCC 700825 / FA 1090)).